The primary structure comprises 207 residues: Peptidyl-prolyl cis-trans isomerase FKBP16-1, chloroplastic (207 aa).

One can recognise a PPIase FKBP-type domain in the interval 104–207 (GDLVELNYVC…VFEIQLLKVL (104 aa)).

The protein belongs to the FKBP-type PPIase family.

It localises to the plastid. The protein localises to the chloroplast thylakoid lumen. The catalysed reaction is [protein]-peptidylproline (omega=180) = [protein]-peptidylproline (omega=0). PPIases accelerate the folding of proteins. It catalyzes the cis-trans isomerization of proline imidic peptide bonds in oligopeptides. This chain is Peptidyl-prolyl cis-trans isomerase FKBP16-1, chloroplastic (FKBP16-1), found in Arabidopsis thaliana (Mouse-ear cress).